The primary structure comprises 149 residues: METLFRLPFAVLECPNIKLKRPGWVHMPSAMTVYALVVVSYFLITGGIIYDVIVEPPSVGSMTDEHGHQRPVAFLAYRVNGQYIMEGLASSFLFTMGGLGFIILDRSNAPNIPKLNRFLLLFIGFVSVLLSFFMARVFMRMKLPGYLMG.

The Cytoplasmic portion of the chain corresponds to 1-32 (METLFRLPFAVLECPNIKLKRPGWVHMPSAMT). A helical membrane pass occupies residues 33 to 53 (VYALVVVSYFLITGGIIYDVI). The Extracellular portion of the chain corresponds to 54 to 83 (VEPPSVGSMTDEHGHQRPVAFLAYRVNGQY). Residues 84–104 (IMEGLASSFLFTMGGLGFIIL) traverse the membrane as a helical segment. Residues 105 to 117 (DRSNAPNIPKLNR) are Cytoplasmic-facing. The helical transmembrane segment at 118–138 (FLLLFIGFVSVLLSFFMARVF) threads the bilayer. Residues 139-149 (MRMKLPGYLMG) are Extracellular-facing.

It belongs to the OSTC family. In terms of assembly, specific component of the STT3A-containing form of the oligosaccharyltransferase (OST) complex.

It is found in the membrane. The protein operates within protein modification; protein glycosylation. Specific component of the STT3A-containing form of the oligosaccharyl transferase (OST) complex that catalyzes the initial transfer of a defined glycan (Glc(3)Man(9)GlcNAc(2) in eukaryotes) from the lipid carrier dolichol-pyrophosphate to an asparagine residue within an Asn-X-Ser/Thr consensus motif in nascent polypeptide chains, the first step in protein N-glycosylation. N-glycosylation occurs cotranslationally and the complex associates with the Sec61 complex at the channel-forming translocon complex that mediates protein translocation across the endoplasmic reticulum (ER). All subunits are required for a maximal enzyme activity. In Gallus gallus (Chicken), this protein is Oligosaccharyltransferase complex subunit OSTC.